A 136-amino-acid chain; its full sequence is MTLTVRVITPDKVVWDEEVQELILPSTTGQLGILSNHAPLLTALEIGVMRVRPGKDWQNIAVMGGFAEVENNEVKVLVNGAELGTTIDAESARQAYTAAQGALEEANRGEDKPNQLKASNNYKKARARLQAAGGAV.

The segment at 100–120 (QGALEEANRGEDKPNQLKASN) is disordered. A compositionally biased stretch (basic and acidic residues) spans 105-114 (EANRGEDKPN).

This sequence belongs to the ATPase epsilon chain family. In terms of assembly, F-type ATPases have 2 components, CF(1) - the catalytic core - and CF(0) - the membrane proton channel. CF(1) has five subunits: alpha(3), beta(3), gamma(1), delta(1), epsilon(1). CF(0) has three main subunits: a, b and c.

It localises to the cellular thylakoid membrane. Its function is as follows. Produces ATP from ADP in the presence of a proton gradient across the membrane. The chain is ATP synthase epsilon chain (atpC) from Synechocystis sp. (strain ATCC 27184 / PCC 6803 / Kazusa).